A 274-amino-acid polypeptide reads, in one-letter code: Thiamine kinase (274 aa).

This sequence belongs to the thiamine kinase family.

It carries out the reaction thiamine + ATP = thiamine phosphate + ADP + H(+). The protein operates within cofactor biosynthesis; thiamine diphosphate biosynthesis; thiamine phosphate from thiamine: step 1/1. In terms of biological role, catalyzes the ATP-dependent phosphorylation of thiamine to thiamine phosphate. Is involved in thiamine salvage. This is Thiamine kinase from Salmonella heidelberg (strain SL476).